Consider the following 291-residue polypeptide: N-acetylmannosamine kinase (291 aa).

Residues 5–12 (AIDIGGTK) and 132–139 (GVGGGVVS) contribute to the ATP site. Zn(2+) is bound by residues H156, C166, C168, and C173.

This sequence belongs to the ROK (NagC/XylR) family. NanK subfamily. Homodimer.

It carries out the reaction an N-acyl-D-mannosamine + ATP = an N-acyl-D-mannosamine 6-phosphate + ADP + H(+). The protein operates within amino-sugar metabolism; N-acetylneuraminate degradation; D-fructose 6-phosphate from N-acetylneuraminate: step 2/5. Functionally, catalyzes the phosphorylation of N-acetylmannosamine (ManNAc) to ManNAc-6-P. The polypeptide is N-acetylmannosamine kinase (Escherichia coli (strain K12 / MC4100 / BW2952)).